A 404-amino-acid chain; its full sequence is SL1278 acyltransferase Chp1 (404 aa).

The Periplasmic portion of the chain corresponds to Met-1–Lys-42. Residues Leu-43 to Ile-63 traverse the membrane as a helical segment. Residues Ala-64–His-404 are Cytoplasmic-facing. Positions Pro-104–Gln-325 constitute a PE-PPE domain.

It belongs to the mycobacterial PPE family.

The protein resides in the cell inner membrane. The enzyme catalyses 3 3'-(hydroxy)phthioceranyl-2'-palmitoyl(stearoyl)-2-O-sulfo-alpha,alpha-trehalose = 3,6,6'-tris-(hydroxy)phthioceranyl-2-palmitoyl(stearoyl)-2'-sulfo-alpha-alpha-trehalose + 2 2'-palmitoyl/stearoyl-2-O-sulfo-alpha,alpha-trehalose.. Activity is potentiated by the SL-1 transporter MmpL8. Inhibited by the lipase inhibitor tetrahydrolipstatin (THL). Its function is as follows. Involved in the final steps of the cell wall sulfolipid-1 (SL-1) biosynthesis. Catalyzes two successive acylations of the precursor 2-palmitoyl-3-(C43)-phthioceranyl-alpha, alpha'-D-trehalose-2'-sulfate (SL1278) to yield the tetraacylated sulfolipid SL-1. The protein is SL1278 acyltransferase Chp1 of Mycobacterium tuberculosis (strain ATCC 25618 / H37Rv).